The primary structure comprises 130 residues: Small ribosomal subunit protein uS9 (130 aa).

This sequence belongs to the universal ribosomal protein uS9 family.

The polypeptide is Small ribosomal subunit protein uS9 (Cupriavidus metallidurans (strain ATCC 43123 / DSM 2839 / NBRC 102507 / CH34) (Ralstonia metallidurans)).